Reading from the N-terminus, the 361-residue chain is Phosphoribosylformylglycinamidine cyclo-ligase (361 aa).

It belongs to the AIR synthase family.

The protein localises to the cytoplasm. It catalyses the reaction 2-formamido-N(1)-(5-O-phospho-beta-D-ribosyl)acetamidine + ATP = 5-amino-1-(5-phospho-beta-D-ribosyl)imidazole + ADP + phosphate + H(+). The protein operates within purine metabolism; IMP biosynthesis via de novo pathway; 5-amino-1-(5-phospho-D-ribosyl)imidazole from N(2)-formyl-N(1)-(5-phospho-D-ribosyl)glycinamide: step 2/2. This chain is Phosphoribosylformylglycinamidine cyclo-ligase, found in Bartonella henselae (strain ATCC 49882 / DSM 28221 / CCUG 30454 / Houston 1) (Rochalimaea henselae).